The primary structure comprises 159 residues: tRNA-specific adenosine deaminase (159 aa).

In terms of domain architecture, CMP/dCMP-type deaminase spans 6-133; that stretch reads EEQTYFMQEA…ERLNHRVQVE (128 aa). Residue H57 participates in Zn(2+) binding. E59 functions as the Proton donor in the catalytic mechanism. Residues C87 and C90 each contribute to the Zn(2+) site.

This sequence belongs to the cytidine and deoxycytidylate deaminase family. In terms of assembly, homodimer. The cofactor is Zn(2+).

The catalysed reaction is adenosine(34) in tRNA + H2O + H(+) = inosine(34) in tRNA + NH4(+). Catalyzes the deamination of adenosine to inosine at the wobble position 34 of tRNA(Arg2). This is tRNA-specific adenosine deaminase from Streptococcus pyogenes serotype M18 (strain MGAS8232).